We begin with the raw amino-acid sequence, 878 residues long: Alanine--tRNA ligase (878 aa).

Positions 562, 566, 670, and 674 each coordinate Zn(2+).

Belongs to the class-II aminoacyl-tRNA synthetase family. Zn(2+) is required as a cofactor.

The protein resides in the cytoplasm. It catalyses the reaction tRNA(Ala) + L-alanine + ATP = L-alanyl-tRNA(Ala) + AMP + diphosphate. Catalyzes the attachment of alanine to tRNA(Ala) in a two-step reaction: alanine is first activated by ATP to form Ala-AMP and then transferred to the acceptor end of tRNA(Ala). Also edits incorrectly charged Ser-tRNA(Ala) and Gly-tRNA(Ala) via its editing domain. This is Alanine--tRNA ligase from Acinetobacter baylyi (strain ATCC 33305 / BD413 / ADP1).